Consider the following 191-residue polypeptide: UPF0312 protein Sbal195_3198 (191 aa).

Positions 1-22 (MKKQLFSALIGASLLAPMAASA) are cleaved as a signal peptide.

The protein belongs to the UPF0312 family. Type 1 subfamily.

The protein localises to the periplasm. The polypeptide is UPF0312 protein Sbal195_3198 (Shewanella baltica (strain OS195)).